The primary structure comprises 63 residues: Large ribosomal subunit protein uL29 (63 aa).

The protein belongs to the universal ribosomal protein uL29 family.

In Mannheimia succiniciproducens (strain KCTC 0769BP / MBEL55E), this protein is Large ribosomal subunit protein uL29.